We begin with the raw amino-acid sequence, 271 residues long: Formamidopyrimidine-DNA glycosylase (271 aa).

Pro2 acts as the Schiff-base intermediate with DNA in catalysis. The active-site Proton donor is Glu3. Lys57 (proton donor; for beta-elimination activity) is an active-site residue. The DNA site is built by His90, Arg109, and Lys151. Residues 236–270 (HVYGRGGKTCTQCGHMLSEIKLGQRATVFCSLCQQ) form an FPG-type zinc finger. Residue Arg260 is the Proton donor; for delta-elimination activity of the active site.

Belongs to the FPG family. In terms of assembly, monomer. Zn(2+) serves as cofactor.

It carries out the reaction Hydrolysis of DNA containing ring-opened 7-methylguanine residues, releasing 2,6-diamino-4-hydroxy-5-(N-methyl)formamidopyrimidine.. The catalysed reaction is 2'-deoxyribonucleotide-(2'-deoxyribose 5'-phosphate)-2'-deoxyribonucleotide-DNA = a 3'-end 2'-deoxyribonucleotide-(2,3-dehydro-2,3-deoxyribose 5'-phosphate)-DNA + a 5'-end 5'-phospho-2'-deoxyribonucleoside-DNA + H(+). Functionally, involved in base excision repair of DNA damaged by oxidation or by mutagenic agents. Acts as a DNA glycosylase that recognizes and removes damaged bases. Has a preference for oxidized purines, such as 7,8-dihydro-8-oxoguanine (8-oxoG). Has AP (apurinic/apyrimidinic) lyase activity and introduces nicks in the DNA strand. Cleaves the DNA backbone by beta-delta elimination to generate a single-strand break at the site of the removed base with both 3'- and 5'-phosphates. This chain is Formamidopyrimidine-DNA glycosylase, found in Shewanella pealeana (strain ATCC 700345 / ANG-SQ1).